Consider the following 188-residue polypeptide: ADP-ribosylation factor K (188 aa).

GTP-binding positions include 34 to 40 (DGAGKST), 75 to 79 (DVGGQ), and 134 to 137 (NKQD).

Belongs to the small GTPase superfamily. Arf family.

It is found in the golgi apparatus. In terms of biological role, GTP-binding protein that may be involved in protein trafficking. May modulate vesicle budding and uncoating within the Golgi apparatus. The chain is ADP-ribosylation factor K (arrK) from Dictyostelium discoideum (Social amoeba).